The sequence spans 395 residues: Xylose isomerase (395 aa).

Catalysis depends on residues His54 and Asp57. Mg(2+) contacts are provided by Glu181, Glu217, His220, Asp245, Asp255, Asp257, and Asp293.

Belongs to the xylose isomerase family. Homotetramer. Mg(2+) serves as cofactor.

The protein localises to the cytoplasm. It catalyses the reaction alpha-D-xylose = alpha-D-xylulofuranose. The chain is Xylose isomerase (xylA) from Arthrobacter sp. (strain NRRL B3728).